We begin with the raw amino-acid sequence, 256 residues long: Necrosis-inducing protein NPP1 (256 aa).

A Conserved undecapeptide motif motif is present at residues 111–121 (AIMYAWYFPKG). The Conserved heptapeptide motif motif lies at 133–139 (GHRHEWE).

Belongs to the Necrosis inducing protein (NPP1) family.

It localises to the secreted. In terms of biological role, secreted effector that acts as a pathogen-associated molecular pattern (PAMP) recognized by the plant immune system. This chain is Necrosis-inducing protein NPP1, found in Phytophthora cinnamomi (Cinnamon fungus).